A 113-amino-acid polypeptide reads, in one-letter code: Putative membrane protein insertion efficiency factor (113 aa).

The protein belongs to the UPF0161 family.

The protein resides in the cell inner membrane. In terms of biological role, could be involved in insertion of integral membrane proteins into the membrane. This is Putative membrane protein insertion efficiency factor from Campylobacter concisus (strain 13826).